Consider the following 156-residue polypeptide: Small ribosomal subunit protein uS7 (156 aa).

The protein belongs to the universal ribosomal protein uS7 family. Part of the 30S ribosomal subunit. Contacts proteins S9 and S11.

One of the primary rRNA binding proteins, it binds directly to 16S rRNA where it nucleates assembly of the head domain of the 30S subunit. Is located at the subunit interface close to the decoding center, probably blocks exit of the E-site tRNA. The polypeptide is Small ribosomal subunit protein uS7 (Microcystis aeruginosa (strain NIES-843 / IAM M-2473)).